The chain runs to 618 residues: GMC oxidoreductase family protein Mala s 12 (618 aa).

Residues 1 to 23 form the signal peptide; sequence MKGIVSWAVVSAALVLSATESLA. FAD is bound by residues Val-129 and Val-280. Residue His-556 is the Proton donor of the active site. Catalysis depends on His-599, which acts as the Proton acceptor.

It belongs to the GMC oxidoreductase family. As to quaternary structure, monomer. The cofactor is FAD.

It localises to the secreted. The polypeptide is GMC oxidoreductase family protein Mala s 12 (Malassezia sympodialis (strain ATCC 42132) (Atopic eczema-associated yeast)).